Here is a 115-residue protein sequence, read N- to C-terminus: U3-lycotoxin-Ls1k (115 aa).

Residues 1–20 form the signal peptide; sequence MKFELLFGVLLVTLFSYSSA. A propeptide spanning residues 21-44 is cleaved from the precursor; that stretch reads EMLDDFDQADEDELLSLIEKEEAR. 4 cysteine pairs are disulfide-bonded: C48/C63, C55/C72, C62/C87, and C74/C85.

It belongs to the neurotoxin 19 (CSTX) family. 01 subfamily. Expressed by the venom gland.

The protein resides in the secreted. The polypeptide is U3-lycotoxin-Ls1k (Lycosa singoriensis (Wolf spider)).